Reading from the N-terminus, the 275-residue chain is Mitochondrial outer membrane protein porin (275 aa).

Met1 carries the post-translational modification Blocked amino end (Met).

This sequence belongs to the eukaryotic mitochondrial porin family. Highly divergent.

It is found in the mitochondrion outer membrane. Forms a channel of about 1,7 nM through the cell membrane that allows diffusion of small hydrophilic molecules. The channel adopts an open conformation at low or zero membrane potential and a closed conformation at potentials above 20 mv. The open state has a weak anion selectivity whereas the closed state is cation-selective. This Dictyostelium discoideum (Social amoeba) protein is Mitochondrial outer membrane protein porin (porA).